The following is a 269-amino-acid chain: 5'-nucleotidase SurE (269 aa).

A divalent metal cation contacts are provided by Asp-11, Asp-12, Ser-43, and Asn-101.

The protein belongs to the SurE nucleotidase family. Requires a divalent metal cation as cofactor.

It is found in the cytoplasm. It carries out the reaction a ribonucleoside 5'-phosphate + H2O = a ribonucleoside + phosphate. Its function is as follows. Nucleotidase that shows phosphatase activity on nucleoside 5'-monophosphates. The sequence is that of 5'-nucleotidase SurE from Synechococcus sp. (strain CC9605).